The following is a 472-amino-acid chain: Cysteine--tRNA ligase (472 aa).

C29 is a Zn(2+) binding site. The 'HIGH' region signature appears at 31–41 (PTVYDFAHIGN). The Zn(2+) site is built by C227, H252, and E256. The 'KMSKS' region motif lies at 285 to 289 (KMSKS). K288 provides a ligand contact to ATP.

It belongs to the class-I aminoacyl-tRNA synthetase family. Monomer. It depends on Zn(2+) as a cofactor.

It localises to the cytoplasm. It catalyses the reaction tRNA(Cys) + L-cysteine + ATP = L-cysteinyl-tRNA(Cys) + AMP + diphosphate. This is Cysteine--tRNA ligase from Bradyrhizobium sp. (strain BTAi1 / ATCC BAA-1182).